A 304-amino-acid chain; its full sequence is ATP phosphoribosyltransferase (304 aa).

Belongs to the ATP phosphoribosyltransferase family. Long subfamily. It depends on Mg(2+) as a cofactor.

Its subcellular location is the cytoplasm. It carries out the reaction 1-(5-phospho-beta-D-ribosyl)-ATP + diphosphate = 5-phospho-alpha-D-ribose 1-diphosphate + ATP. It participates in amino-acid biosynthesis; L-histidine biosynthesis; L-histidine from 5-phospho-alpha-D-ribose 1-diphosphate: step 1/9. Its activity is regulated as follows. Feedback inhibited by histidine. Functionally, catalyzes the condensation of ATP and 5-phosphoribose 1-diphosphate to form N'-(5'-phosphoribosyl)-ATP (PR-ATP). Has a crucial role in the pathway because the rate of histidine biosynthesis seems to be controlled primarily by regulation of HisG enzymatic activity. This chain is ATP phosphoribosyltransferase, found in Xylella fastidiosa (strain M12).